Here is a 326-residue protein sequence, read N- to C-terminus: Eukaryotic translation initiation factor 2 subunit 1 (326 aa).

An S1 motif domain is found at 24–95; that stretch reads DDLIMVKVNR…QKGYIDLSKR (72 aa). Serine 59 is modified (phosphoserine; by eIK1, eIK2 and PK4). The interval 291-326 is disordered; sequence LDKHDGLSSDDEYSSDGDEDDSSNDDDNSSDEDDDD. Acidic residues predominate over residues 298 to 326; sequence SSDDEYSSDGDEDDSSNDDDNSSDEDDDD.

Belongs to the eIF-2-alpha family. Post-translationally, phosphorylates at Ser-59 in mature trophozoites, schizonts and gametocytes but not in rings and young trophozoites. Phosphorylates at Ser-59 by eIK2 in salivary gland sporozoites but not in midgut and hemocoel sporozoites. Dephosphorylated at Ser-59 by UIS2. Phosphorylation of eIF2alpha subunit of the pre-initiation complex eIF2 inhibits recycling of inactive eIF2-GDP to active eIF2-GTP by limiting the activity of the guanine nucleotide exchange factor eIF2B and thus, inhibits protein translation.

It localises to the cytoplasm. It is found in the stress granule. Functionally, functions in the early steps of protein synthesis by forming a ternary complex with GTP and initiator tRNA. May regulate protein translation in response to amino acid starvation. May regulate protein at various stages of parasite development. The polypeptide is Eukaryotic translation initiation factor 2 subunit 1 (Plasmodium berghei (strain Anka)).